The chain runs to 272 residues: NADH-cytochrome b5 reductase 3 (272 aa).

The region spanning 11-123 (DIKYPLRLID…RGPNGLLVYQ (113 aa)) is the FAD-binding FR-type domain. An N6-acetyllysine modification is found at K13. Y14 is modified (phosphotyrosine). At K21 the chain carries N6-acetyllysine. R63, P64, Y65, V80, K82, and Y84 together coordinate FAD. K91 is subject to N6-acetyllysine. 4 residues coordinate FAD: K97, M98, S99, and T156.

Belongs to the flavoprotein pyridine nucleotide cytochrome reductase family. As to quaternary structure, component of a complex composed of cytochrome b5, NADH-cytochrome b5 reductase (CYB5R3) and MTARC2. Interacts with MTLN; the interaction is required to maintain cellular lipid composition and leads to stimulation of mitochondrial respiratory complex I activity. FAD serves as cofactor.

Its subcellular location is the endoplasmic reticulum membrane. The protein resides in the mitochondrion outer membrane. The catalysed reaction is 2 Fe(III)-[cytochrome b5] + NADH = 2 Fe(II)-[cytochrome b5] + NAD(+) + H(+). In terms of biological role, catalyzes the reduction of two molecules of cytochrome b5 using NADH as the electron donor. The polypeptide is NADH-cytochrome b5 reductase 3 (CYB5R3) (Sus scrofa (Pig)).